The following is a 327-amino-acid chain: Lipoyl synthase (327 aa).

The [4Fe-4S] cluster site is built by Cys74, Cys79, Cys85, Cys100, Cys104, Cys107, and Ser314. Positions 86 to 303 (FSGGTATFMI…AEEGEKMGFK (218 aa)) constitute a Radical SAM core domain.

It belongs to the radical SAM superfamily. Lipoyl synthase family. Requires [4Fe-4S] cluster as cofactor.

Its subcellular location is the cytoplasm. It carries out the reaction [[Fe-S] cluster scaffold protein carrying a second [4Fe-4S](2+) cluster] + N(6)-octanoyl-L-lysyl-[protein] + 2 oxidized [2Fe-2S]-[ferredoxin] + 2 S-adenosyl-L-methionine + 4 H(+) = [[Fe-S] cluster scaffold protein] + N(6)-[(R)-dihydrolipoyl]-L-lysyl-[protein] + 4 Fe(3+) + 2 hydrogen sulfide + 2 5'-deoxyadenosine + 2 L-methionine + 2 reduced [2Fe-2S]-[ferredoxin]. It functions in the pathway protein modification; protein lipoylation via endogenous pathway; protein N(6)-(lipoyl)lysine from octanoyl-[acyl-carrier-protein]: step 2/2. Catalyzes the radical-mediated insertion of two sulfur atoms into the C-6 and C-8 positions of the octanoyl moiety bound to the lipoyl domains of lipoate-dependent enzymes, thereby converting the octanoylated domains into lipoylated derivatives. The sequence is that of Lipoyl synthase from Pseudomonas aeruginosa (strain LESB58).